Consider the following 316-residue polypeptide: Ribosomal RNA small subunit methyltransferase H (316 aa).

Residues 35–37 (GGH), Asp-55, Phe-79, Asp-101, and Gln-108 each bind S-adenosyl-L-methionine.

The protein belongs to the methyltransferase superfamily. RsmH family.

The protein localises to the cytoplasm. It carries out the reaction cytidine(1402) in 16S rRNA + S-adenosyl-L-methionine = N(4)-methylcytidine(1402) in 16S rRNA + S-adenosyl-L-homocysteine + H(+). Its function is as follows. Specifically methylates the N4 position of cytidine in position 1402 (C1402) of 16S rRNA. The chain is Ribosomal RNA small subunit methyltransferase H from Aliivibrio salmonicida (strain LFI1238) (Vibrio salmonicida (strain LFI1238)).